Reading from the N-terminus, the 177-residue chain is Thymidine kinase (177 aa).

Position 11–18 (glycine 11–serine 18) interacts with ATP. Residue glutamate 83 is the Proton acceptor of the active site. Phenylalanine 113 provides a ligand contact to substrate. Zn(2+) contacts are provided by cysteine 138 and cysteine 141. Isoleucine 157–glycine 161 lines the substrate pocket. Zn(2+) is bound by residues cysteine 170 and cysteine 173.

This sequence belongs to the thymidine kinase family. Homotetramer. Two molecules of substrate bind to each enzyme tetramer.

It catalyses the reaction thymidine + ATP = dTMP + ADP + H(+). Phosphorylates thymidine and thymidine analogs, such as azidothymidine (AZT). Part of the salvage pathway for pyrimidine deoxyribonucleotide synthesis. The chain is Thymidine kinase (OPG101) from Monkeypox virus (strain Zaire-96-I-16) (MPX).